Reading from the N-terminus, the 316-residue chain is Nautilin-63 (316 aa).

Disordered stretches follow at residues isoleucine 1 to glycine 26, proline 149 to phenylalanine 173, aspartate 189 to serine 238, and proline 259 to lysine 278. Low complexity predominate over residues threonine 10–glycine 26. 3 stretches are compositionally biased toward polar residues: residues threonine 152–glutamine 163, glycine 207–serine 216, and serine 269–lysine 278.

Glycosylated; contains mainly glucose, galactose, galactosamine, glucosamine and glucuronic acid. In terms of tissue distribution, component of the acid-soluble organic matrix of nacreous shell layers (at protein level).

It localises to the secreted. Its function is as follows. Involved in nacre formation. Affects morphology of calcite crystals in vitro but does not inhibit their formation. Binds chitin. This is Nautilin-63 from Nautilus macromphalus (Bellybutton nautilus).